The primary structure comprises 459 residues: Cysteine--tRNA ligase (459 aa).

A Zn(2+)-binding site is contributed by Cys28. The 'HIGH' region motif lies at 30–40 (VTVYDLCHIGH). Residues Cys209, His234, and Glu238 each contribute to the Zn(2+) site. Positions 266-270 (KMSKS) match the 'KMSKS' region motif. Residue Lys269 coordinates ATP.

This sequence belongs to the class-I aminoacyl-tRNA synthetase family. Monomer. It depends on Zn(2+) as a cofactor.

Its subcellular location is the cytoplasm. It carries out the reaction tRNA(Cys) + L-cysteine + ATP = L-cysteinyl-tRNA(Cys) + AMP + diphosphate. The sequence is that of Cysteine--tRNA ligase from Haemophilus influenzae (strain PittGG).